The primary structure comprises 178 residues: Translation initiation factor IF-3 (178 aa).

This sequence belongs to the IF-3 family. As to quaternary structure, monomer.

It localises to the cytoplasm. In terms of biological role, IF-3 binds to the 30S ribosomal subunit and shifts the equilibrium between 70S ribosomes and their 50S and 30S subunits in favor of the free subunits, thus enhancing the availability of 30S subunits on which protein synthesis initiation begins. The polypeptide is Translation initiation factor IF-3 (Macrococcus caseolyticus (strain JCSC5402) (Macrococcoides caseolyticum)).